We begin with the raw amino-acid sequence, 194 residues long: Imidazoleglycerol-phosphate dehydratase (194 aa).

Belongs to the imidazoleglycerol-phosphate dehydratase family.

It is found in the cytoplasm. The catalysed reaction is D-erythro-1-(imidazol-4-yl)glycerol 3-phosphate = 3-(imidazol-4-yl)-2-oxopropyl phosphate + H2O. It participates in amino-acid biosynthesis; L-histidine biosynthesis; L-histidine from 5-phospho-alpha-D-ribose 1-diphosphate: step 6/9. This is Imidazoleglycerol-phosphate dehydratase from Limosilactobacillus fermentum (strain NBRC 3956 / LMG 18251) (Lactobacillus fermentum).